We begin with the raw amino-acid sequence, 300 residues long: Dioxygenase FUM3 (300 aa).

3 residues coordinate Fe cation: His146, Asp148, and His222.

It belongs to the PhyH family. In terms of assembly, homodimer. Requires Fe cation as cofactor.

It functions in the pathway mycotoxin biosynthesis. Its function is as follows. Dioxygenase; part of the gene cluster that mediates the biosynthesis of fumonisins B1 (FB1), B2 (FB2), B3 (FB3), and B4 (FB4), which are carcinogenic mycotoxins. Within the pathway, FUM3 performs the C-5 hydroxylation present in FB1 and FB2 and which occurs late in the biosynthesis. The biosynthesis starts with the FUM1-catalyzed carbon chain assembly from one molecule of acetyl-CoA, eight molecules of malonyl-CoA, and two molecules of methionine (in S-adenosyl form). The C18 polyketide chain is released from the enzyme by a nucleophilic attack of a carbanion, which is derived from R-carbon of alanine by decarboxylation, on the carbonyl carbon of polyketide acyl chain. This step is catalyzed by the pyridoxal 5'-phosphate-dependent aminoacyl transferase FUM8. The resultant 3-keto intermediate is then stereospecifically reduced to a 3-hydroxyl product by reductase FUM13. Subsequent oxidations at C-10 by the cytochrome P450 monooxygenase FUM2, C-14 and C-15 by FUM6, FUM12 or FUM15, tricarballylic esterification of the hydroxyl groups on C-14 and C-15 by acyltransferase FUM14, and C-5 hydroxylation by 2-keto-glutarate-dependent dioxygenase FUM3 furnish the biosynthesis of fumonisins. The tricarballylic moieties are most likely derived from the citric acid cycle, and their addition to the carbon backbone may involve FUM7, FUM10, FUM11 and FUM14. In Gibberella moniliformis (strain M3125 / FGSC 7600) (Maize ear and stalk rot fungus), this protein is Dioxygenase FUM3.